The sequence spans 124 residues: uncharacterized protein (124 aa).

This is an uncharacterized protein from Acanthamoeba polyphaga (Amoeba).